A 151-amino-acid chain; its full sequence is Calmodulin (151 aa).

4 EF-hand domains span residues 10-45, 46-81, 83-118, and 119-151; these read EQIS…LGQN, PTEA…KMKD, DSEE…LGEK, and LTDE…MLSK. 18 residues coordinate Ca(2+): D23, D25, D27, S29, E34, D59, D61, N63, T65, E70, D96, D98, N100, E107, D132, D134, D136, and E143.

Belongs to the calmodulin family.

Functionally, calmodulin mediates the control of a large number of enzymes, ion channels and other proteins by Ca(2+). Among the enzymes to be stimulated by the calmodulin-Ca(2+) complex are a number of protein kinases and phosphatases. This Pneumocystis carinii protein is Calmodulin.